A 710-amino-acid chain; its full sequence is Polyribonucleotide nucleotidyltransferase (710 aa).

Residues aspartate 487 and aspartate 493 each contribute to the Mg(2+) site. The KH domain occupies 554–613; that stretch reads PKIITMTINPDKIRDVIGPSGKQINKIIEETGVKIDIEQDGTVFISSIDQQMNEKAKKII. One can recognise an S1 motif domain in the interval 623–691; that stretch reads GEIYLGKVKR…KQGRVNLSRK (69 aa).

This sequence belongs to the polyribonucleotide nucleotidyltransferase family. Mg(2+) is required as a cofactor.

Its subcellular location is the cytoplasm. It carries out the reaction RNA(n+1) + phosphate = RNA(n) + a ribonucleoside 5'-diphosphate. Involved in mRNA degradation. Catalyzes the phosphorolysis of single-stranded polyribonucleotides processively in the 3'- to 5'-direction. This is Polyribonucleotide nucleotidyltransferase from Bacillus cytotoxicus (strain DSM 22905 / CIP 110041 / 391-98 / NVH 391-98).